Here is a 629-residue protein sequence, read N- to C-terminus: 1-deoxy-D-xylulose-5-phosphate synthase (629 aa).

Residues H72 and 113–115 contribute to the thiamine diphosphate site; that span reads GHA. Mg(2+) is bound at residue D144. Thiamine diphosphate contacts are provided by residues 145–146, N174, Y287, and E370; that span reads GA. N174 provides a ligand contact to Mg(2+).

It belongs to the transketolase family. DXPS subfamily. In terms of assembly, homodimer. Requires Mg(2+) as cofactor. Thiamine diphosphate is required as a cofactor.

It catalyses the reaction D-glyceraldehyde 3-phosphate + pyruvate + H(+) = 1-deoxy-D-xylulose 5-phosphate + CO2. Its pathway is metabolic intermediate biosynthesis; 1-deoxy-D-xylulose 5-phosphate biosynthesis; 1-deoxy-D-xylulose 5-phosphate from D-glyceraldehyde 3-phosphate and pyruvate: step 1/1. Its function is as follows. Catalyzes the acyloin condensation reaction between C atoms 2 and 3 of pyruvate and glyceraldehyde 3-phosphate to yield 1-deoxy-D-xylulose-5-phosphate (DXP). The protein is 1-deoxy-D-xylulose-5-phosphate synthase of Prochlorococcus marinus (strain MIT 9301).